The sequence spans 536 residues: MSSYGAALRIHTFGESHGSAVGCIIDGLPPRLPLSVEDVQPQLNRRRPGQGPLSTQRREKDRVNILSGVEDGYTLGTPLAMLVWNEDRRPQEYHALATVPRPGHGDFTYHAKYHIHAKSGGGRSSARETLARVAAGAVVEKWLGMHYGTSFTAWVCQVGDVSVPRSLRRKWERQPPTRQDVDRLGVVRVSPDGTTFLDANNRLYDERGEELVEEEDKARRRLLFGVDNPTPGETVIETRCPCPSTAVRMAVKINQTRSLGDSIGGCISGAIVRPPLGLGEPCFDKVEAELAKAMMSLPATKGFEIGQGFASVTLRGSEHNDRFIPFERASCSFSESAASTIKHERDGCSAATLSRERASDGRTTSRHEEEVERGRERIQRDTLHVTGVDQQNGNSEDSVRYTSKSEASITRLSGNAASGGAPVCRIPLGEGVRIRCGSNNAGGTLAGITSGENIFFRVAFKPVSSIGLEQETADFAGEMNQLAVKGRHDPCVLPRAPPLVESMAALVIGDLCLRQRAREGPHPLLVLPQHSGCPSC.

H17 is a catalytic residue. Residues 37 to 59 (EDVQPQLNRRRPGQGPLSTQRRE) are disordered. The active site involves H104. The segment at 344 to 377 (ERDGCSAATLSRERASDGRTTSRHEEEVERGRER) is disordered. Residues 354 to 377 (SRERASDGRTTSRHEEEVERGRER) are compositionally biased toward basic and acidic residues. D489 is an active-site residue.

It belongs to the chorismate synthase family. The cofactor is FMNH2.

The catalysed reaction is 5-O-(1-carboxyvinyl)-3-phosphoshikimate = chorismate + phosphate. The enzyme catalyses FMNH2 + NADP(+) = FMN + NADPH + 2 H(+). The protein operates within metabolic intermediate biosynthesis; chorismate biosynthesis; chorismate from D-erythrose 4-phosphate and phosphoenolpyruvate: step 7/7. In terms of biological role, bifunctional chorismate synthase and flavin reductase. Catalyzes the conversion of 5-enolpyruvylshikimate 3-phosphate (EPSP) to form chorismate. Acts also as a flavin reductase (FR) able to generate reduced flavin mononucleotide in the presence of NADPH. In Toxoplasma gondii, this protein is Chorismate synthase (AROC).